A 349-amino-acid chain; its full sequence is DNA fragmentation factor subunit beta (349 aa).

The CIDE-N domain maps to 7–83; it reads QPKCVKLRAL…LLTAGETWHG (77 aa). The disordered stretch occupies residues 319–349; sequence RSRIYRPQTGSRRKQPPRKQPPRKRPPRKRQ. Residues 329–349 are compositionally biased toward basic residues; it reads SRRKQPPRKQPPRKRPPRKRQ.

As to quaternary structure, heterodimer of DFFA and DFFB. Interacts with H1-1.

It localises to the cytoplasm. It is found in the nucleus. Inhibited by DFFA (DFF45). In terms of biological role, nuclease that induces DNA fragmentation and chromatin condensation during apoptosis. Degrades naked DNA and induces apoptotic morphology. The polypeptide is DNA fragmentation factor subunit beta (Dffb) (Rattus norvegicus (Rat)).